The following is a 395-amino-acid chain: Phosphoglycerate kinase (395 aa).

Residues 21-23, Arg-36, 59-62, Arg-113, and Arg-146 contribute to the substrate site; these read DLN and HLGR. Residues Lys-197, Glu-324, and 350-353 each bind ATP; that span reads GGDT.

This sequence belongs to the phosphoglycerate kinase family. As to quaternary structure, monomer.

It is found in the cytoplasm. The catalysed reaction is (2R)-3-phosphoglycerate + ATP = (2R)-3-phospho-glyceroyl phosphate + ADP. Its pathway is carbohydrate degradation; glycolysis; pyruvate from D-glyceraldehyde 3-phosphate: step 2/5. The sequence is that of Phosphoglycerate kinase from Acinetobacter baylyi (strain ATCC 33305 / BD413 / ADP1).